The chain runs to 325 residues: MSEGDADGGGREIWIEKYRPQTLDDIVGHESITERLKQYIAQNDLPHLLFAGPAGVGKTTAATAIAKEVYGDDWRENFLELNASDQRGIDVVRDRIKSFARASFGGYDHRIIFLDEADALTSDAQSALRRTMEQFSDNTRFILSCNYSSQIIDPIQSRCAVFRFSPLGDAAVDEQIRIIADTEGIELTDDGVDALVYAADGDMRKAINGLQAAAVMGGTVDEEAVYTITSTARPEEIREMVTEAMDGDFTAARSQLETLLTDVGIAGGDIIDQLHRSVWEFDLEEREAVQLMERIGEADYRITAGASEQLQLEALLAALARGNET.

52 to 59 is an ATP binding site; it reads GPAGVGKT.

The protein belongs to the activator 1 small subunits family. RfcS subfamily. In terms of assembly, heteromultimer composed of small subunits (RfcS) and large subunits (RfcL).

Part of the RFC clamp loader complex which loads the PCNA sliding clamp onto DNA. This chain is Replication factor C small subunit, found in Natronomonas pharaonis (strain ATCC 35678 / DSM 2160 / CIP 103997 / JCM 8858 / NBRC 14720 / NCIMB 2260 / Gabara) (Halobacterium pharaonis).